The sequence spans 188 residues: Adenine phosphoribosyltransferase (188 aa).

Belongs to the purine/pyrimidine phosphoribosyltransferase family. In terms of assembly, homodimer.

It localises to the cytoplasm. It catalyses the reaction AMP + diphosphate = 5-phospho-alpha-D-ribose 1-diphosphate + adenine. Its pathway is purine metabolism; AMP biosynthesis via salvage pathway; AMP from adenine: step 1/1. Functionally, catalyzes a salvage reaction resulting in the formation of AMP, that is energically less costly than de novo synthesis. This Paraburkholderia phytofirmans (strain DSM 17436 / LMG 22146 / PsJN) (Burkholderia phytofirmans) protein is Adenine phosphoribosyltransferase.